Here is a 202-residue protein sequence, read N- to C-terminus: Nucleoid occlusion factor SlmA (202 aa).

Positions 14-75 (KERQQQVLEV…ALIERIEQTL (62 aa)) constitute an HTH tetR-type domain. The H-T-H motif DNA-binding region spans 38–57 (TTERLAKAVGVSEGALYRYF).

The protein belongs to the nucleoid occlusion factor SlmA family. In terms of assembly, homodimer. Interacts with FtsZ.

Its subcellular location is the cytoplasm. The protein localises to the nucleoid. In terms of biological role, required for nucleoid occlusion (NO) phenomenon, which prevents Z-ring formation and cell division over the nucleoid. Acts as a DNA-associated cell division inhibitor that binds simultaneously chromosomal DNA and FtsZ, and disrupts the assembly of FtsZ polymers. SlmA-DNA-binding sequences (SBS) are dispersed on non-Ter regions of the chromosome, preventing FtsZ polymerization at these regions. The polypeptide is Nucleoid occlusion factor SlmA (Haemophilus ducreyi (strain 35000HP / ATCC 700724)).